A 203-amino-acid polypeptide reads, in one-letter code: Large ribosomal subunit protein bL25 (203 aa).

The protein belongs to the bacterial ribosomal protein bL25 family. CTC subfamily. Part of the 50S ribosomal subunit; part of the 5S rRNA/L5/L18/L25 subcomplex. Contacts the 5S rRNA. Binds to the 5S rRNA independently of L5 and L18.

This is one of the proteins that binds to the 5S RNA in the ribosome where it forms part of the central protuberance. The sequence is that of Large ribosomal subunit protein bL25 from Cupriavidus metallidurans (strain ATCC 43123 / DSM 2839 / NBRC 102507 / CH34) (Ralstonia metallidurans).